A 446-amino-acid chain; its full sequence is GTPase Der (446 aa).

EngA-type G domains lie at 3 to 167 and 180 to 353; these read PVLA…AFDE and IRLA…ASAT. GTP-binding positions include 9-16, 56-60, 119-122, 186-193, 233-237, and 298-301; these read GRPNVGKS, DTGGF, NKAE, DTAGL, and NKWD. A KH-like domain is found at 354–438; that stretch reads KKLATPVLTR…PMRIEMKSSR (85 aa).

This sequence belongs to the TRAFAC class TrmE-Era-EngA-EngB-Septin-like GTPase superfamily. EngA (Der) GTPase family. In terms of assembly, associates with the 50S ribosomal subunit.

GTPase that plays an essential role in the late steps of ribosome biogenesis. This chain is GTPase Der, found in Methylibium petroleiphilum (strain ATCC BAA-1232 / LMG 22953 / PM1).